A 396-amino-acid polypeptide reads, in one-letter code: Phosphopentomutase (396 aa).

Asp14, Asp286, His291, Asp327, His328, and His339 together coordinate Mn(2+).

This sequence belongs to the phosphopentomutase family. Mn(2+) serves as cofactor.

The protein resides in the cytoplasm. The enzyme catalyses 2-deoxy-alpha-D-ribose 1-phosphate = 2-deoxy-D-ribose 5-phosphate. The catalysed reaction is alpha-D-ribose 1-phosphate = D-ribose 5-phosphate. Its pathway is carbohydrate degradation; 2-deoxy-D-ribose 1-phosphate degradation; D-glyceraldehyde 3-phosphate and acetaldehyde from 2-deoxy-alpha-D-ribose 1-phosphate: step 1/2. Functionally, isomerase that catalyzes the conversion of deoxy-ribose 1-phosphate (dRib-1-P) and ribose 1-phosphate (Rib-1-P) to deoxy-ribose 5-phosphate (dRib-5-P) and ribose 5-phosphate (Rib-5-P), respectively. The polypeptide is Phosphopentomutase (Staphylococcus carnosus (strain TM300)).